Here is a 95-residue protein sequence, read N- to C-terminus: UPF0512 protein H (95 aa).

Belongs to the UPF0512 family.

The polypeptide is UPF0512 protein H (Dictyostelium discoideum (Social amoeba)).